The primary structure comprises 347 residues: NADH-ubiquinone oxidoreductase chain 2 (347 aa).

Helical transmembrane passes span 13 to 33 (VFTGTLITALSSHWFFAWLGL), 55 to 75 (AAIKYFLTQATASMIFLMAIL), 96 to 116 (LMIVTALAMKLGMAPFHFWVP), 122 to 142 (VPLTSGLLLLTWQKLAPISIM), 151 to 171 (TNILLTLSILSILVGSWGGLN), 178 to 198 (ILAYSSITHMGWMVAVLPYNP), 199 to 219 (NITILNLIIYITLTTTTFLIL), 237 to 257 (LTWLMPLISSTLLSLGGLPPL), 277 to 297 (IAPTIMAIISLLNLYFYARLI), and 326 to 346 (LPTLTILTALLLPISPLILSI).

It belongs to the complex I subunit 2 family. In terms of assembly, core subunit of respiratory chain NADH dehydrogenase (Complex I) which is composed of 45 different subunits. Interacts with TMEM242.

The protein resides in the mitochondrion inner membrane. It carries out the reaction a ubiquinone + NADH + 5 H(+)(in) = a ubiquinol + NAD(+) + 4 H(+)(out). Its function is as follows. Core subunit of the mitochondrial membrane respiratory chain NADH dehydrogenase (Complex I) which catalyzes electron transfer from NADH through the respiratory chain, using ubiquinone as an electron acceptor. Essential for the catalytic activity and assembly of complex I. The protein is NADH-ubiquinone oxidoreductase chain 2 of Pongo pygmaeus (Bornean orangutan).